The chain runs to 292 residues: NAD(P)H-hydrate epimerase (292 aa).

The transit peptide at 1-52 (MYGLRTLFSLGLLVGGARLGARVAQVGALGGTCPLGQGLVADGNSQCKQFRT) directs the protein to the mitochondrion. A YjeF N-terminal domain is found at 68–279 (AQAVDEELFN…ALEKKYSLNL (212 aa)). 122–126 (NNGGD) contributes to the (6S)-NADPHX binding site. 2 residues coordinate K(+): Asn123 and Asp189. (6S)-NADPHX is bound by residues 193 to 199 (GFSFKGA) and Asp222. Ser225 is a binding site for K(+).

Belongs to the NnrE/AIBP family. Requires K(+) as cofactor.

The protein resides in the mitochondrion. The protein localises to the secreted. The catalysed reaction is (6R)-NADHX = (6S)-NADHX. The enzyme catalyses (6R)-NADPHX = (6S)-NADPHX. In terms of biological role, catalyzes the epimerization of the S- and R-forms of NAD(P)HX, a damaged form of NAD(P)H that is a result of enzymatic or heat-dependent hydration. This is a prerequisite for the S-specific NAD(P)H-hydrate dehydratase to allow the repair of both epimers of NAD(P)HX. The sequence is that of NAD(P)H-hydrate epimerase from Xenopus tropicalis (Western clawed frog).